Here is a 387-residue protein sequence, read N- to C-terminus: Phosphoglycerate kinase (387 aa).

Residues 21-23, Arg36, 59-62, Arg113, and Arg146 each bind substrate; these read DLN and HLGR. ATP is bound by residues Lys197, Glu314, and 340–343; that span reads GGDT.

Belongs to the phosphoglycerate kinase family. Monomer.

The protein localises to the cytoplasm. The enzyme catalyses (2R)-3-phosphoglycerate + ATP = (2R)-3-phospho-glyceroyl phosphate + ADP. It functions in the pathway carbohydrate degradation; glycolysis; pyruvate from D-glyceraldehyde 3-phosphate: step 2/5. This is Phosphoglycerate kinase from Enterobacter sp. (strain 638).